A 205-amino-acid chain; its full sequence is Adenylyl-sulfate kinase (205 aa).

31 to 38 (GLSGAGKS) serves as a coordination point for ATP. The active-site Phosphoserine intermediate is the serine 105.

Belongs to the APS kinase family.

It carries out the reaction adenosine 5'-phosphosulfate + ATP = 3'-phosphoadenylyl sulfate + ADP + H(+). It participates in sulfur metabolism; hydrogen sulfide biosynthesis; sulfite from sulfate: step 2/3. Catalyzes the synthesis of activated sulfate. The polypeptide is Adenylyl-sulfate kinase (Shewanella sp. (strain MR-7)).